Consider the following 192-residue polypeptide: Thiamine transporter ThiT (192 aa).

6 helical membrane passes run 10–30 (LIEIAIMTAAAVILDIVSGMF), 31–51 (LSMPQGGSVSIMMIPIFLISF), 57–77 (AGLTTGLLTGLVQIAIGNLFA), 81–101 (VQLLLDYIVAFAAIGISGCFA), 123–143 (AVFIGSLLRYAAHVISGAVFF), and 164–184 (YMVPSFIICAIVLCLLFMTAP).

This sequence belongs to the vitamin uptake transporter (VUT/ECF) (TC 2.A.88) family. Thiamine transporter subfamily. As to quaternary structure, forms a stable energy-coupling factor (ECF) transporter complex composed of a membrane-embedded substrate-binding protein (S component), two ATP-binding proteins (A components) and a transmembrane protein (T component).

The protein localises to the cell membrane. Probably a thiamine-binding protein that interacts with the energy-coupling factor (ECF) ABC-transporter complex. Unlike classic ABC transporters this ECF transporter provides the energy necessary to transport a number of different substrates. The substrates themselves are bound by transmembrane, not extracytoplasmic soluble proteins. This chain is Thiamine transporter ThiT (thiT), found in Bacillus subtilis (strain 168).